Consider the following 375-residue polypeptide: Succinyl-diaminopimelate desuccinylase (375 aa).

A Zn(2+)-binding site is contributed by histidine 66. Residue aspartate 68 is part of the active site. Residue aspartate 99 participates in Zn(2+) binding. Glutamate 133 functions as the Proton acceptor in the catalytic mechanism. Zn(2+) contacts are provided by glutamate 134, glutamate 162, and histidine 348.

Belongs to the peptidase M20A family. DapE subfamily. In terms of assembly, homodimer. Requires Zn(2+) as cofactor. The cofactor is Co(2+).

It carries out the reaction N-succinyl-(2S,6S)-2,6-diaminopimelate + H2O = (2S,6S)-2,6-diaminopimelate + succinate. Its pathway is amino-acid biosynthesis; L-lysine biosynthesis via DAP pathway; LL-2,6-diaminopimelate from (S)-tetrahydrodipicolinate (succinylase route): step 3/3. Its function is as follows. Catalyzes the hydrolysis of N-succinyl-L,L-diaminopimelic acid (SDAP), forming succinate and LL-2,6-diaminopimelate (DAP), an intermediate involved in the bacterial biosynthesis of lysine and meso-diaminopimelic acid, an essential component of bacterial cell walls. The sequence is that of Succinyl-diaminopimelate desuccinylase from Teredinibacter turnerae (strain ATCC 39867 / T7901).